A 974-amino-acid polypeptide reads, in one-letter code: Localization factor PodJL (974 aa).

Coiled coils occupy residues 81–163 (DEVG…EAAG), 218–320 (VARL…SAQA), and 375–469 (QAQA…LEAA). 2 disordered regions span residues 460-497 (SEAQ…SPFE) and 589-611 (AAAR…KKEK). A compositionally biased stretch (low complexity) spans 589–598 (AAARAAAASE). A helical membrane pass occupies residues 642-662 (ALVVFAAAGALGAGVGGLLLL). Sel1-like repeat units follow at residues 757-793 (PAAQ…NGGD), 794-829 (PRAM…DMGL), and 830-865 (VDSQ…RAGD).

In terms of processing, two isoforms exist, the full-length translation product PodJL and a C-terminal truncated form PodJS. Both appear during a specific time period of the cell cycle to control different aspects of polar organelle development.

The protein resides in the membrane. Its function is as follows. PodJL provides the positional information for the localization of several polar organelles (pili, adhesive holdfast and chemotactic apparatus) by recruiting structural (CpaE) and regulatory (PleC) proteins to a specific cell pole. The chain is Localization factor PodJL (podJ) from Caulobacter vibrioides (strain ATCC 19089 / CIP 103742 / CB 15) (Caulobacter crescentus).